A 187-amino-acid chain; its full sequence is Elongation factor P (187 aa).

The protein belongs to the elongation factor P family.

It localises to the cytoplasm. Its pathway is protein biosynthesis; polypeptide chain elongation. Involved in peptide bond synthesis. Stimulates efficient translation and peptide-bond synthesis on native or reconstituted 70S ribosomes in vitro. Probably functions indirectly by altering the affinity of the ribosome for aminoacyl-tRNA, thus increasing their reactivity as acceptors for peptidyl transferase. In Desulforapulum autotrophicum (strain ATCC 43914 / DSM 3382 / VKM B-1955 / HRM2) (Desulfobacterium autotrophicum), this protein is Elongation factor P.